The following is a 216-amino-acid chain: MRIAPYGTGSVVKTAIFCFVIFITALFLPQPGGVILATAALGFLLFTLYFYRDPERKIPDGKGLVIAPADGKIVLKQTLDHPVTGPGSTLVSIFMSPFNVHVNRIPVDGLVRDLRYHEGKFLMAFDHRSMTDNERMEITLDTAAGPLWFCQVSGFVARRIVCDLEAGQEVASGKRFGMIKLGSRVDIVLPSSIQIKVKEGMKTTAGETILGQTGGF.

Catalysis depends on Ser183, which acts as the Schiff-base intermediate with substrate; via pyruvic acid. Ser183 carries the pyruvic acid (Ser); by autocatalysis modification.

It belongs to the phosphatidylserine decarboxylase family. PSD-A subfamily. In terms of assembly, heterodimer of a large membrane-associated beta subunit and a small pyruvoyl-containing alpha subunit. The cofactor is pyruvate. In terms of processing, is synthesized initially as an inactive proenzyme. Formation of the active enzyme involves a self-maturation process in which the active site pyruvoyl group is generated from an internal serine residue via an autocatalytic post-translational modification. Two non-identical subunits are generated from the proenzyme in this reaction, and the pyruvate is formed at the N-terminus of the alpha chain, which is derived from the carboxyl end of the proenzyme. The post-translation cleavage follows an unusual pathway, termed non-hydrolytic serinolysis, in which the side chain hydroxyl group of the serine supplies its oxygen atom to form the C-terminus of the beta chain, while the remainder of the serine residue undergoes an oxidative deamination to produce ammonia and the pyruvoyl prosthetic group on the alpha chain.

The protein resides in the cell membrane. The enzyme catalyses a 1,2-diacyl-sn-glycero-3-phospho-L-serine + H(+) = a 1,2-diacyl-sn-glycero-3-phosphoethanolamine + CO2. It participates in phospholipid metabolism; phosphatidylethanolamine biosynthesis; phosphatidylethanolamine from CDP-diacylglycerol: step 2/2. Catalyzes the formation of phosphatidylethanolamine (PtdEtn) from phosphatidylserine (PtdSer). The chain is Phosphatidylserine decarboxylase proenzyme from Chlorobaculum tepidum (strain ATCC 49652 / DSM 12025 / NBRC 103806 / TLS) (Chlorobium tepidum).